Reading from the N-terminus, the 113-residue chain is Urease subunit beta (113 aa).

It belongs to the urease beta subunit family. As to quaternary structure, heterotrimer of UreA (gamma), UreB (beta) and UreC (alpha) subunits. Three heterotrimers associate to form the active enzyme.

The protein localises to the cytoplasm. It carries out the reaction urea + 2 H2O + H(+) = hydrogencarbonate + 2 NH4(+). Its pathway is nitrogen metabolism; urea degradation; CO(2) and NH(3) from urea (urease route): step 1/1. This Nitrosospira multiformis (strain ATCC 25196 / NCIMB 11849 / C 71) protein is Urease subunit beta.